The following is a 393-amino-acid chain: HORMA domain-containing protein 1 (393 aa).

Residues Gln-24–Val-226 enclose the HORMA domain. Positions Ser-322–Ile-393 are disordered. Residues Lys-352 to Gln-361 are compositionally biased toward basic and acidic residues. Residue Ser-375 is modified to Phosphoserine. Residues Lys-382–Lys-385 carry the Nuclear localization signal motif.

In terms of assembly, interacts with HORMAD2. Interacts with IHO1. In terms of processing, phosphorylated at Ser-376 in a SPO11-dependent manner.

Its subcellular location is the nucleus. The protein resides in the chromosome. Functionally, plays a key role in meiotic progression. Regulates 3 different functions during meiosis: ensures that sufficient numbers of processed DNA double-strand breaks (DSBs) are available for successful homology search by increasing the steady-state numbers of single-stranded DSB ends. Promotes synaptonemal-complex formation independently of its role in homology search. Plays a key role in the male mid-pachytene checkpoint and the female meiotic prophase checkpoint: required for efficient build-up of ATR activity on unsynapsed chromosome regions, a process believed to form the basis of meiotic silencing of unsynapsed chromatin (MSUC) and meiotic prophase quality control in both sexes. This Bos taurus (Bovine) protein is HORMA domain-containing protein 1 (HORMAD1).